A 385-amino-acid chain; its full sequence is MGQPYAWRLLSRVSSFRRASVILQHLRMSMHTEAAEVLLERRGCGGVITLNRPKFLNALSLNMIRQIYPQLKTWEQDPDTFLIIIKGAGGKAFCAGGDIKALSEAKKARQNLTQDLFREEYILNNAIASCQKPYVALIDGITMGGGVGLSVHGQFRVATERSLFAMPETGIGLFPDVGGGYFLPRLQGKLGYFLALTGYRLKGRDVHRAGIATHFVDSEKLRVLEEELLALKSPSAEDVAGVLESYHAKSKMDQDKSIIFEEHMDKINSCFSANTVEQIIENLRQDGSPFAIEQMKVINKMSPTSLKITLRQLMEGSSKTLQEVLIMEYRITQACMEGHDFHEGVRAVLIDKDQTPKWKPANLKDVTDEDLNSYFKSLGSSDLKF.

A mitochondrion-targeting transit peptide spans Met-1 to Thr-32. An N6-acetyllysine; alternate mark is found at Lys-54, Lys-91, and Lys-100. 3 positions are modified to N6-succinyllysine; alternate: Lys-54, Lys-91, and Lys-100. Substrate contacts are provided by Glu-120, Gly-145, Glu-168, and Asp-176. Lys-220 is subject to N6-acetyllysine; alternate. The residue at position 220 (Lys-220) is an N6-succinyllysine; alternate. At Ser-233 the chain carries Phosphoserine. Residues Lys-249 and Lys-256 each carry the N6-succinyllysine modification. Lys-296 carries the N6-acetyllysine; alternate modification. An N6-succinyllysine; alternate modification is found at Lys-296. Residue Lys-300 is modified to N6-succinyllysine. Lys-352 carries the N6-acetyllysine; alternate modification. Lys-352 carries the post-translational modification N6-succinyllysine; alternate. An N6-acetyllysine mark is found at Lys-359 and Lys-364. Lys-376 carries the post-translational modification N6-succinyllysine.

It belongs to the enoyl-CoA hydratase/isomerase family.

The protein localises to the mitochondrion. It carries out the reaction 3-hydroxy-2-methylpropanoyl-CoA + H2O = 3-hydroxy-2-methylpropanoate + CoA + H(+). It participates in amino-acid degradation; L-valine degradation. Its function is as follows. Hydrolyzes 3-hydroxyisobutyryl-CoA (HIBYL-CoA), a saline catabolite. Has high activity toward isobutyryl-CoA. Could be an isobutyryl-CoA dehydrogenase that functions in valine catabolism. Also hydrolyzes 3-hydroxypropanoyl-CoA. This is 3-hydroxyisobutyryl-CoA hydrolase, mitochondrial (Hibch) from Mus musculus (Mouse).